We begin with the raw amino-acid sequence, 744 residues long: FHF complex subunit HOOK-interacting protein 2B (744 aa).

2 disordered regions span residues 184 to 213 and 510 to 530; these read KTARESTAPPKDIAGYRDKDCPHSDALNRD and LDSGLQPSTKPPPAPATSSDG. Positions 197 to 213 are enriched in basic and acidic residues; sequence AGYRDKDCPHSDALNRD.

Belongs to the FHIP family. In terms of tissue distribution, expressed in colon.

Its function is as follows. Able to activate MAPK/ERK and TGFB signaling pathways. May regulate the activity of genes involved in intestinal barrier function and immunoprotective inflammation. May play a role in cell proliferation. This chain is FHF complex subunit HOOK-interacting protein 2B, found in Mus musculus (Mouse).